Here is a 510-residue protein sequence, read N- to C-terminus: uncharacterized protein (510 aa).

A run of 12 helical transmembrane segments spans residues 17–37 (LKLGIISLGLGGLYSIILVVL), 56–76 (LIIHVNLSILIWLLSITASVW), 111–131 (VLYIYPKLAFFATLLIAISPL), 148–168 (IVFILGLSLFGVTLLLYAINI), 180–200 (LVNVTVFSTIIMFILSFVCFG), 223–243 (LLFWSGGHLLQFIYTQILIFI), 261–281 (FYLFILYLNFVFSILILFGHI), 300–320 (YLGGIAPILCLVGMVVELVLM), 355–375 (IIKTILLCSITLFLLGGLIAI), 382–402 (LVIPAHYHGSIVGISIACMGY), 434–454 (AIYLLTFGQILHILGLAFSGI), and 472–492 (LLMGMMGIGGLIAIVGGLMFV).

It to A.aeolicus AQ_155.

The protein resides in the cell membrane. This is an uncharacterized protein from Rickettsia prowazekii (strain Madrid E).